The chain runs to 292 residues: MYPSCRPRTPLPRPCMTFIATISWSAEAPVDTPVERSGKAVVSQHFGRAARSYDEHAVLQLAVGRSLVQRLPEALPINHALDLGCATAPFARAQQQALPDVQWQAVDLSSAMLAEAAERGRLDETYQPLCADAENLPLSTNSQGLVFSCFALQWCDPQVVMAEINRVLAPGGRLLLAVPLAGSLAELQSSWQRVNHRPHVNALPSLADWRSAAFQAGFADAQLQQQVMVEYYDSVKAIARRLKATGADHVSGASGLTGKNAWQAMVKEYEARRTQQGLPLTWNVLFLEAEKS.

It belongs to the methyltransferase superfamily.

The catalysed reaction is malonyl-[ACP] + S-adenosyl-L-methionine = malonyl-[ACP] methyl ester + S-adenosyl-L-homocysteine. The protein operates within cofactor biosynthesis; biotin biosynthesis. In terms of biological role, converts the free carboxyl group of a malonyl-thioester to its methyl ester by transfer of a methyl group from S-adenosyl-L-methionine (SAM). It allows to synthesize pimeloyl-ACP via the fatty acid synthetic pathway. This is Malonyl-[acyl-carrier protein] O-methyltransferase from Alcanivorax borkumensis (strain ATCC 700651 / DSM 11573 / NCIMB 13689 / SK2).